Consider the following 433-residue polypeptide: Serine hydroxymethyltransferase (433 aa).

121 to 123 (AHV) serves as a coordination point for (6S)-5,6,7,8-tetrahydrofolate. N6-(pyridoxal phosphate)lysine is present on lysine 227. Glutamate 243 is a (6S)-5,6,7,8-tetrahydrofolate binding site.

The protein belongs to the SHMT family. In terms of assembly, homodimer. Requires pyridoxal 5'-phosphate as cofactor.

Its subcellular location is the cytoplasm. The catalysed reaction is 5,10-methylenetetrahydrosulfopterin + glycine + H2O = tetrahydrosulfopterin + L-serine. Its pathway is amino-acid biosynthesis; glycine biosynthesis; glycine from L-serine: step 1/1. Is completely inhibited by addition of NaCNBH(3) in vitro; this reagent is a known inhibitor of PLP enzymes, that reduces the internal aldimine of PLP to the catalytically inactive and stable secondary amine. Is also inhibited by L-cysteine, which forms a thiazolidine complex with the active site PLP. In terms of biological role, catalyzes the reversible interconversion of serine and glycine with the modified folate sulfopterin serving as the one-carbon carrier. Cannot use tetrahydrofolate (THF or H4PteGlu) as the pteridine substrate. Also exhibits a pteridine-independent aldolase activity toward beta-hydroxyamino acids, producing glycine and aldehydes, via a retro-aldol mechanism. Thus, is able to catalyze the cleavage of both allo-threonine and beta-phenylserine. This chain is Serine hydroxymethyltransferase, found in Saccharolobus solfataricus (strain ATCC 35092 / DSM 1617 / JCM 11322 / P2) (Sulfolobus solfataricus).